The primary structure comprises 134 residues: UPF0412 protein YaaI (134 aa).

The N-terminal stretch at 1–23 is a signal peptide; sequence MKSVFTISASLAISLMLCCTAQA.

This sequence belongs to the UPF0412 family.

This chain is UPF0412 protein YaaI, found in Escherichia coli O157:H7.